The sequence spans 524 residues: Phosphoenolpyruvate carboxykinase (ATP) (524 aa).

The substrate site is built by Arg-52, Tyr-188, and Lys-194. ATP is bound by residues Lys-194, His-213, and 229 to 237 (GLSGTGKTT). Residues Lys-194 and His-213 each coordinate Mn(2+). Position 250 (Asp-250) interacts with Mn(2+). 3 residues coordinate ATP: Glu-278, Arg-314, and Thr-439. Arg-314 provides a ligand contact to substrate.

Belongs to the phosphoenolpyruvate carboxykinase (ATP) family. It depends on Mn(2+) as a cofactor.

The protein localises to the cytoplasm. The catalysed reaction is oxaloacetate + ATP = phosphoenolpyruvate + ADP + CO2. It functions in the pathway carbohydrate biosynthesis; gluconeogenesis. In terms of biological role, involved in the gluconeogenesis. Catalyzes the conversion of oxaloacetate (OAA) to phosphoenolpyruvate (PEP) through direct phosphoryl transfer between the nucleoside triphosphate and OAA. This Campylobacter jejuni subsp. doylei (strain ATCC BAA-1458 / RM4099 / 269.97) protein is Phosphoenolpyruvate carboxykinase (ATP).